The primary structure comprises 282 residues: NADH-ubiquinone oxidoreductase chain 2 (282 aa).

Helical transmembrane passes span 17-37 (ILTN…VVFI), 58-78 (SLGL…IILL), 87-107 (FWIF…FLTF), 115-135 (ILLQ…LLIC), 166-186 (FSMF…VLLI), 202-222 (TTLV…IFSL), and 232-252 (FTLF…FWLI).

It belongs to the complex I subunit 2 family.

It is found in the mitochondrion inner membrane. It catalyses the reaction a ubiquinone + NADH + 5 H(+)(in) = a ubiquinol + NAD(+) + 4 H(+)(out). Its function is as follows. Core subunit of the mitochondrial membrane respiratory chain NADH dehydrogenase (Complex I) that is believed to belong to the minimal assembly required for catalysis. Complex I functions in the transfer of electrons from NADH to the respiratory chain. The immediate electron acceptor for the enzyme is believed to be ubiquinone. This chain is NADH-ubiquinone oxidoreductase chain 2, found in Caenorhabditis elegans.